The following is a 262-amino-acid chain: Phosphomannomutase 1 (262 aa).

Ala2 is subject to N-acetylalanine. Asp19 serves as the catalytic Nucleophile. The Mg(2+) site is built by Asp19 and Asp21. Catalysis depends on Asp21, which acts as the Proton donor/acceptor. Arg28, Arg132, Arg143, Arg150, Met186, Ser188, and Asp190 together coordinate alpha-D-mannose 1-phosphate. Residues Asn218, Tyr230, Asp232, and Thr235 each contribute to the Mg(2+) site. The residue at position 242 (Ser242) is a Phosphoserine.

The protein belongs to the eukaryotic PMM family. In terms of assembly, homodimer. Mg(2+) serves as cofactor. As to expression, present in brain, where it is restricted to neuronal cell bodies. Present at lower levels in pancreas, liver, lung, gonads, uterus, adrenal glands and pituitary (at protein level). Undetectable in intestine.

The protein resides in the cytoplasm. It catalyses the reaction alpha-D-mannose 1-phosphate = D-mannose 6-phosphate. It functions in the pathway nucleotide-sugar biosynthesis; GDP-alpha-D-mannose biosynthesis; alpha-D-mannose 1-phosphate from D-fructose 6-phosphate: step 2/2. Its activity is regulated as follows. IMP, a metabolite whose concentration is elevated in anoxia, inhibits phosphomannomutase and phosphoglucomutase activities and strongly enhances glucose-1,6-bisphosphatase activity. In terms of biological role, involved in the synthesis of the GDP-mannose and dolichol-phosphate-mannose required for a number of critical mannosyl transfer reactions. In addition, may be responsible for the degradation of glucose-1,6-bisphosphate in ischemic brain. The polypeptide is Phosphomannomutase 1 (Pmm1) (Mus musculus (Mouse)).